A 905-amino-acid chain; its full sequence is Transcription termination factor 1 (905 aa).

2 stretches are compositionally biased toward basic and acidic residues: residues 1 to 16 and 24 to 33; these read MEGE…PVSD and IHKERPQKHS. The segment at 1–33 is disordered; it reads MEGESSRFEIHTPVSDKKKKKCSIHKERPQKHS. Residues 1 to 223 are N-terminal region (NRD); it reads MEGESSRFEI…AHKNKSKKKK (223 aa). Residue Ser-65 is modified to Phosphoserine. A disordered region spans residues 151–443; the sequence is SHAHKSEALH…KSRPRQKKTQ (293 aa). Composition is skewed to basic residues over residues 163-174 and 215-226; these read VREKKNKKHQRK and HKNKSKKKKKKS. At Ser-240 the chain carries Phosphoserine. Thr-248 bears the Phosphothreonine mark. 3 stretches are compositionally biased toward basic residues: residues 270–283, 330–339, and 385–401; these read THKK…KKKS, NKSKKKKKKS, and TKKK…KRAR. Ser-403 carries the phosphoserine modification. A compositionally biased stretch (polar residues) spans 410–419; that stretch reads PSKNSESTLF. A Phosphotyrosine modification is found at Tyr-476. A phosphoserine mark is found at Ser-478, Ser-481, and Ser-487. The interval 498-886 is may be involved in interaction with ARF; it reads LQEFIPNIKD…IEKESEGQAP (389 aa). Myb-like domains lie at 612-661 and 661-745; these read DVNN…SQIS and SSQR…TEIL. Residue Lys-700 forms a Glycyl lysine isopeptide (Lys-Gly) (interchain with G-Cter in SUMO2) linkage. A Phosphoserine modification is found at Ser-872.

Oligomer. The oligomeric structure enables to interact simultaneously with two separate DNA fragments. Interacts with BAZ2A/TIP5. Interacts with CAVIN1. Interacts (via the N-terminal region (NRD) and a C-terminal region) with CDKN2A/ARF; the interaction is direct. Interacts (via C-terminal region) with NPM1/B23.

It is found in the nucleus. The protein localises to the nucleolus. It localises to the nucleoplasm. Its function is as follows. Multifunctional nucleolar protein that terminates ribosomal gene transcription, mediates replication fork arrest and regulates RNA polymerase I transcription on chromatin. Plays a dual role in rDNA regulation, being involved in both activation and silencing of rDNA transcription. Interaction with BAZ2A/TIP5 recovers DNA-binding activity. The polypeptide is Transcription termination factor 1 (TTF1) (Homo sapiens (Human)).